The sequence spans 356 residues: Trans-enoyl reductase pgmF (356 aa).

NADP(+) is bound by residues 57 to 60 (VDFK), 175 to 178 (SGGC), 198 to 201 (STPN), tyrosine 216, 261 to 262 (VG), and 342 to 343 (AK).

Belongs to the zinc-containing alcohol dehydrogenase family.

Functionally, FAD-linked oxidoreductase; part of the gene cluster that mediates the biosynthesis of pleosporalin A, ascomycone A, as well as a third cryptic naphthoquinone derived pigment, all responsible for the coloration of conidia. The pathway begins with the biosynthesis of the cyclized heptaketide 3-acetonyl-1,6,8-trihydroxy-2-naphthaldehyde by the NR-PKS pgmA. The C-6 hydroxyl group is further methylated by the O-methyltransferase pgmB to yield fusarubinaldehyde which is in turn oxidized by the cytochrome P450 monooxygenase pgmC at C-9. The C-1 hydroxyl group is then methylated spontaneously. Although pgmE, pgmD and pgmH are essential for the production of pleosporalin A, it is not the case for the 2 other final products and it remains difficult to assign a specific function to each enzyme. PgmF and pgmG seem not to be involved in pigment biosynthesis although they were regulated by the cluster-specific transcription factor pgmR. The sequence is that of Trans-enoyl reductase pgmF from Aspergillus terreus (strain NIH 2624 / FGSC A1156).